An 83-amino-acid chain; its full sequence is Polcalcin Bra r 2 (83 aa).

EF-hand domains lie at T5 to V40 and D43 to L75. 10 residues coordinate Ca(2+): D18, N20, D22, K24, E29, D53, D55, D57, Y59, and E64.

This is Polcalcin Bra r 2 from Brassica campestris (Field mustard).